A 247-amino-acid chain; its full sequence is Probable transcriptional regulatory protein Swit_2142 (247 aa).

Basic residues predominate over residues M1–K14. The segment at M1–R21 is disordered.

It belongs to the TACO1 family.

Its subcellular location is the cytoplasm. The sequence is that of Probable transcriptional regulatory protein Swit_2142 from Rhizorhabdus wittichii (strain DSM 6014 / CCUG 31198 / JCM 15750 / NBRC 105917 / EY 4224 / RW1) (Sphingomonas wittichii).